Consider the following 465-residue polypeptide: tRNA modification GTPase MnmE (465 aa).

(6S)-5-formyl-5,6,7,8-tetrahydrofolate-binding residues include Arg30, Glu92, and Arg132. The TrmE-type G domain maps to 227-388; the sequence is GLQVALVGRP…LIEAVLKTCG (162 aa). Position 237 (Asn237) interacts with K(+). Residues 237 to 242, 256 to 262, 281 to 284, and 342 to 345 each bind GTP; these read NVGKSS, TDLPGTT, DTAG, and NKAD. Ser241 serves as a coordination point for Mg(2+). Residues Thr256, Leu258, and Thr261 each contribute to the K(+) site. Thr262 is a Mg(2+) binding site. Lys465 contributes to the (6S)-5-formyl-5,6,7,8-tetrahydrofolate binding site.

The protein belongs to the TRAFAC class TrmE-Era-EngA-EngB-Septin-like GTPase superfamily. TrmE GTPase family. Homodimer. Heterotetramer of two MnmE and two MnmG subunits. It depends on K(+) as a cofactor.

The protein localises to the cytoplasm. Exhibits a very high intrinsic GTPase hydrolysis rate. Involved in the addition of a carboxymethylaminomethyl (cmnm) group at the wobble position (U34) of certain tRNAs, forming tRNA-cmnm(5)s(2)U34. The protein is tRNA modification GTPase MnmE of Prochlorococcus marinus (strain MIT 9303).